The primary structure comprises 137 residues: CUB domain-containing protein (137 aa).

A signal peptide spans 1-21 (MRLSRAFAWPLLCSIATTVKA). 2 disulfides stabilise this stretch: Cys-30–Cys-51 and Cys-75–Cys-96. One can recognise a CUB domain in the interval 30-132 (CGGHYTDEYG…TFFEIYYFVD (103 aa)).

This Homo sapiens (Human) protein is CUB domain-containing protein.